Reading from the N-terminus, the 697-residue chain is Elongation factor G (697 aa).

Residues 8-283 (EHIRNIGICA…AVVDFLPSPT (276 aa)) enclose the tr-type G domain. GTP contacts are provided by residues 17 to 24 (AHIDAGKT), 81 to 85 (DTPGH), and 135 to 138 (NKMD).

Belongs to the TRAFAC class translation factor GTPase superfamily. Classic translation factor GTPase family. EF-G/EF-2 subfamily.

Its subcellular location is the cytoplasm. Catalyzes the GTP-dependent ribosomal translocation step during translation elongation. During this step, the ribosome changes from the pre-translocational (PRE) to the post-translocational (POST) state as the newly formed A-site-bound peptidyl-tRNA and P-site-bound deacylated tRNA move to the P and E sites, respectively. Catalyzes the coordinated movement of the two tRNA molecules, the mRNA and conformational changes in the ribosome. The chain is Elongation factor G from Rickettsia rhipicephali.